Reading from the N-terminus, the 315-residue chain is Prephenate dehydratase (315 aa).

Residues 3 to 190 form the Prephenate dehydratase domain; that stretch reads RIAYLGPQGT…ARTRFVLVGR (188 aa). Positions 204–281 constitute an ACT domain; that stretch reads SVALRLPNTP…EDVRYLGSWP (78 aa).

In terms of assembly, homodimer.

It catalyses the reaction prephenate + H(+) = 3-phenylpyruvate + CO2 + H2O. It participates in amino-acid biosynthesis; L-phenylalanine biosynthesis; phenylpyruvate from prephenate: step 1/1. This chain is Prephenate dehydratase (pheA), found in Mycobacterium sp. (strain JLS).